We begin with the raw amino-acid sequence, 716 residues long: Polyribonucleotide nucleotidyltransferase (716 aa).

Residues aspartate 480 and aspartate 486 each contribute to the Mg(2+) site. Positions 547–606 (PKIVQLQIDIDKISLVIGSTGKTVKAITDEFEVKVQIEQNGKIILFGDDDFKMQKAKERI) constitute a KH domain. The S1 motif domain occupies 616–711 (GEIYEGTVKK…KFGKIDLEIV (96 aa)).

This sequence belongs to the polyribonucleotide nucleotidyltransferase family. Mg(2+) serves as cofactor.

The protein resides in the cytoplasm. It carries out the reaction RNA(n+1) + phosphate = RNA(n) + a ribonucleoside 5'-diphosphate. In terms of biological role, involved in mRNA degradation. Catalyzes the phosphorolysis of single-stranded polyribonucleotides processively in the 3'- to 5'-direction. The polypeptide is Polyribonucleotide nucleotidyltransferase (Borreliella burgdorferi (strain ATCC 35210 / DSM 4680 / CIP 102532 / B31) (Borrelia burgdorferi)).